Reading from the N-terminus, the 656-residue chain is Methylenetetrahydrofolate reductase (NADPH) (656 aa).

The segment at 1–46 is disordered; the sequence is MVNEARGNDSLNPCLEGSASSSSESSKDSSRCSTPGLDPERHERLR. 9 positions are modified to phosphoserine: Ser10, Ser18, Ser20, Ser21, Ser23, Ser25, Ser26, Ser29, and Ser30. Thr34 is subject to Phosphothreonine. Glu63 serves as the catalytic Proton donor/acceptor. Residues 63–68 and 94–95 contribute to the NAD(+) site; these read EFFPPR and TW. A Phosphothreonine modification is found at Thr94. 94–95 contacts FAD; that stretch reads TW. Ser103 is subject to Phosphoserine. Residues His127, 157–159, 174–175, Tyr197, 201–204, Asp210, and Lys217 contribute to the FAD site; these read RGD, YA, and HPEA. Asp159 is a binding site for substrate. Substrate is bound by residues Gln228, Tyr321, and Arg325. Position 394 is a phosphoserine (Ser394). Thr451 carries the post-translational modification Phosphothreonine. Residues Asn456, 461-464, 481-485, Thr560, and Thr573 each bind S-adenosyl-L-methionine; these read AAET and TINSQ.

Belongs to the methylenetetrahydrofolate reductase family. Homodimer. It depends on FAD as a cofactor. In terms of processing, phosphorylation of an N-terminal serine-rich phosphorylation region increases sensitivity to S-adenosylmethionine and inhibition.

The enzyme catalyses (6S)-5-methyl-5,6,7,8-tetrahydrofolate + NADP(+) = (6R)-5,10-methylene-5,6,7,8-tetrahydrofolate + NADPH + H(+). The protein operates within one-carbon metabolism; tetrahydrofolate interconversion. With respect to regulation, allosterically regulated by S-adenosylmethionine (SAM). Its function is as follows. Catalyzes the conversion of 5,10-methylenetetrahydrofolate to 5-methyltetrahydrofolate, a cosubstrate for homocysteine remethylation to methionine. Represents a key regulatory connection between the folate and methionine cycles. The protein is Methylenetetrahydrofolate reductase (NADPH) (MTHFR) of Macaca fascicularis (Crab-eating macaque).